The following is a 446-amino-acid chain: Cyclin-F2-2 (446 aa).

Residues 191 to 216 form a disordered region; the sequence is YNGDNDAPAPDNSTASRPQLCAPYDD.

This sequence belongs to the cyclin family. Cyclin F subfamily.

This is Cyclin-F2-2 (CYCF2-2) from Oryza sativa subsp. japonica (Rice).